The chain runs to 196 residues: Glycerol-3-phosphate acyltransferase (196 aa).

The next 5 membrane-spanning stretches (helical) occupy residues 1-21 (MIILAALLAYILGSVPFGYLT), 53-73 (AITAIGDVGKGMLAVYIGSLL), 78-98 (GALVASFFVVIGHAYSIFLKF), 112-132 (IMTSIKVTVVVFFIWLTVMLI), and 152-172 (LLFGLDLSYIYLGIFLAVMIF).

Belongs to the PlsY family. Probably interacts with PlsX.

The protein localises to the cell membrane. The catalysed reaction is an acyl phosphate + sn-glycerol 3-phosphate = a 1-acyl-sn-glycero-3-phosphate + phosphate. It functions in the pathway lipid metabolism; phospholipid metabolism. Catalyzes the transfer of an acyl group from acyl-phosphate (acyl-PO(4)) to glycerol-3-phosphate (G3P) to form lysophosphatidic acid (LPA). This enzyme utilizes acyl-phosphate as fatty acyl donor, but not acyl-CoA or acyl-ACP. The protein is Glycerol-3-phosphate acyltransferase of Carboxydothermus hydrogenoformans (strain ATCC BAA-161 / DSM 6008 / Z-2901).